Reading from the N-terminus, the 584-residue chain is MESVNKCGKSASTRNCTVKMSRKMWVLSLLALAALQLHSGSEVAAHLNVFLNPVEVMRLLGVSAEVYYVREGHINNYALNFIVPVPANVKDISFTWQSLAGRGLPYSINVVSSDQEVLPRPAINVSHSGEIPTTIQTWSIALKCSGLKAAEVDVTVSLEVVLNRSLNNVTHLVFRRKKICLMNDSAEDLSEDVDDPQLLETVMLPPTGLITLVVGVSVAMGSVCLLLMIAYCVKGAANKRQHHQHGGQPMRTSSFQRLNTHPPCQSSMGSAAYMTPSIIAPIHGSSLPRKVPVSVEQQHPEELHRRISELTVERCRVRLSSLLQEGTFGRVYRGTYNDTQDVLVKTVAQHASQMQVLLLLQEGMLLYGASHPGILSVLGVSIEDHTTPFVLYPALNNTRNLKQFLLDPACARTVTTIQIVMMASQLSMALDHLHSHGVVHKDIATRNCVIDDQLRVKLSDSSLSRDLFPSDYNCLGDSENRPVKWMSLEALQHKQFSEASDSWAFGVLMWELCTSAKQPYAEVDPFEMEHYLKDGYRLAQPFNCPDELFTIMAYCWALLPAERPTFAQLQSCLSEFYSQITRYV.

The N-terminal stretch at methionine 1–glycine 40 is a signal peptide. Residues serine 41–glycine 208 lie on the Extracellular side of the membrane. The WIF domain maps to valine 49 to cysteine 180. 4 N-linked (GlcNAc...) asparagine glycosylation sites follow: asparagine 124, asparagine 163, asparagine 168, and asparagine 183. A helical membrane pass occupies residues leucine 209 to isoleucine 229. Over alanine 230–valine 584 the chain is Cytoplasmic. Residues glutamine 241 to histidine 261 form a disordered region. The segment covering methionine 250–histidine 261 has biased composition (polar residues). Positions valine 317 to tyrosine 577 constitute a Protein kinase domain. ATP contacts are provided by residues leucine 323–valine 331 and lysine 345. The Proton acceptor role is filled by aspartate 442. Tyrosine 472 bears the Phosphotyrosine; by autocatalysis mark.

The protein belongs to the protein kinase superfamily. Tyr protein kinase family. As to expression, expressed in dynamic domains in the embryonic epidermis, many of which border on sites of epithelial invagination into the embryo interior, including ventral furrow, cephalic furrow, fore- and hindgut, optic lobe and tracheal pits. Later in embryogenesis, expression is seen in imaginal tissues.

It is found in the cell membrane. The enzyme catalyses L-tyrosyl-[protein] + ATP = O-phospho-L-tyrosyl-[protein] + ADP + H(+). In terms of biological role, may play an essential role in neuronal pathway recognition and ventral muscle attachment site selection. The sequence is that of Tyrosine-protein kinase Dnt (dnt) from Drosophila melanogaster (Fruit fly).